The sequence spans 314 residues: Homeobox-leucine zipper protein HAT7 (314 aa).

Residues 77–109 (HHHLTQKSPTTTNNMNDQDQVGEEDNLSDDGSH) form a disordered region. Residues 82–95 (QKSPTTTNNMNDQD) show a composition bias toward polar residues. The homeobox DNA-binding region spans 112-171 (LGEKKKRLNLEQVRALEKSFELGNKLEPERKMQLAKALGLQPRQIAIWFQNRRARWKTKQ). Positions 172-207 (LERDYDSLKKQFDVLKSDNDSLLAHNKKLHAELVAL) are leucine-zipper.

The protein belongs to the HD-ZIP homeobox family. Class I subfamily. As to expression, expressed predominantly in flowers, and in the cortex of the root and the stem.

It localises to the nucleus. In terms of biological role, probable transcription factor. The polypeptide is Homeobox-leucine zipper protein HAT7 (HAT7) (Arabidopsis thaliana (Mouse-ear cress)).